The following is an 868-amino-acid chain: Pentatricopeptide repeat-containing protein At2g27610 (868 aa).

PPR repeat units lie at residues 57–91, 92–126, 127–157, 158–192, 193–227, 228–258, 259–293, 294–328, 329–359, 361–395, 396–426, 427–457, 458–492, 493–528, 529–559, 560–594, 595–625, and 631–661; these read DRESYISLLFGFSRDGRTQEAKRLFLNIHRLGMEM, DCSIFSSVLKVSATLCDELFGRQLHCQCIKFGFLD, DVSVGTSLVDTYMKGSNFKDGRKVFDEMKER, NVVTWTTLISGYARNSMNDEVLTLFMRMQNEGTQP, NSFTFAAALGVLAEEGVGGRGLQVHTVVVKNGLDK, TIPVSNSLINLYLKCGNVRKARILFDKTEVK, SVVTWNSMISGYAANGLDLEALGMFYSMRLNYVRL, SESSFASVIKLCANLKELRFTEQLHCSVVKYGFLF, DQNIRTALMVAYSKCTAMLDALRLFKEIGCV, NVVSWTAMISGFLQNDGKEEAVDLFSEMKRKGVRP, NEFTYSVILTALPVISPSEVHAQVVKTNYER, SSTVGTALLDAYVKLGKVEEAAKVFSGIDDK, DIVAWSAMLAGYAQTGETEAAIKMFGELTKGGIKP, NEFTFSSILNVCAATNASMGQGKQFHGFAIKSRLDS, SLCVSSALLTMYAKKGNIESAEEVFKRQREK, DLVSWNSMISGYAQHGQAMKALDVFKEMKKRKVKM, DGVTFIGVFAACTHAGLVEEGEKYFDIMVRD, and TKEHNSCMVDLYSRAGQLEKAMKVIENMPNP. Residues 666-741 form a type E motif region; sequence IWRTILAACR…EPGYSWIEVK (76 aa). Residues 742 to 772 form a type E(+) motif region; that stretch reads NKTYSFLAGDRSHPLKDQIYMKLEDLSTRLK. Positions 773 to 868 are type DYW motif; it reads DLGYEPDTSY…DGVCSCGDFW (96 aa).

The protein belongs to the PPR family. PCMP-H subfamily.

The protein is Pentatricopeptide repeat-containing protein At2g27610 (PCMP-H60) of Arabidopsis thaliana (Mouse-ear cress).